We begin with the raw amino-acid sequence, 482 residues long: tRNA sulfurtransferase (482 aa).

Residues 61–165 (LAIRDALTRI…DDRLLLIKGR (105 aa)) enclose the THUMP domain. ATP is bound by residues 183 to 184 (LI), Lys-265, Gly-287, and Gln-296. Cys-344 and Cys-456 are disulfide-bonded. Residues 404–482 (FGPNDVILDI…GFNNVKVYRL (79 aa)) enclose the Rhodanese domain. Cys-456 serves as the catalytic Cysteine persulfide intermediate.

The protein belongs to the ThiI family.

It is found in the cytoplasm. The enzyme catalyses [ThiI sulfur-carrier protein]-S-sulfanyl-L-cysteine + a uridine in tRNA + 2 reduced [2Fe-2S]-[ferredoxin] + ATP + H(+) = [ThiI sulfur-carrier protein]-L-cysteine + a 4-thiouridine in tRNA + 2 oxidized [2Fe-2S]-[ferredoxin] + AMP + diphosphate. The catalysed reaction is [ThiS sulfur-carrier protein]-C-terminal Gly-Gly-AMP + S-sulfanyl-L-cysteinyl-[cysteine desulfurase] + AH2 = [ThiS sulfur-carrier protein]-C-terminal-Gly-aminoethanethioate + L-cysteinyl-[cysteine desulfurase] + A + AMP + 2 H(+). It participates in cofactor biosynthesis; thiamine diphosphate biosynthesis. Catalyzes the ATP-dependent transfer of a sulfur to tRNA to produce 4-thiouridine in position 8 of tRNAs, which functions as a near-UV photosensor. Also catalyzes the transfer of sulfur to the sulfur carrier protein ThiS, forming ThiS-thiocarboxylate. This is a step in the synthesis of thiazole, in the thiamine biosynthesis pathway. The sulfur is donated as persulfide by IscS. This is tRNA sulfurtransferase from Shigella boydii serotype 18 (strain CDC 3083-94 / BS512).